A 194-amino-acid chain; its full sequence is Small ribosomal subunit protein uS7 (194 aa).

The protein belongs to the universal ribosomal protein uS7 family. As to quaternary structure, part of the 30S ribosomal subunit.

Functionally, one of the primary rRNA binding proteins, it binds directly to 16S rRNA where it nucleates assembly of the head domain of the 30S subunit. Is located at the subunit interface close to the decoding center. This Sulfurisphaera tokodaii (strain DSM 16993 / JCM 10545 / NBRC 100140 / 7) (Sulfolobus tokodaii) protein is Small ribosomal subunit protein uS7.